An 82-amino-acid polypeptide reads, in one-letter code: MNHKFIALLLVVLCCALAVHQVSAEVPSHCTLSLATGTCKGYFPRFGYNIEMGKCVEFIYGGCDGNANNFRNLEECQQSCSV.

The signal sequence occupies residues 1-24 (MNHKFIALLLVVLCCALAVHQVSA). Positions 30-80 (CTLSLATGTCKGYFPRFGYNIEMGKCVEFIYGGCDGNANNFRNLEECQQSC) constitute a BPTI/Kunitz inhibitor domain. Intrachain disulfides connect C30–C80, C39–C63, and C55–C76.

This sequence belongs to the venom Kunitz-type family. As to expression, expressed by the venom gland.

It is found in the secreted. In terms of biological role, serine protease inhibitor that inhibits plasmin (IC(50)=43.53 nM, Ki=3.6 nM), thereby acting as an antifibrinolytic agent. May act in a cooperative manner with the serine protease Bi-VSP (AC B5U2W0) to promote the spread of bee venom under anti-bleeding conditions. The protein is Kunitz-type serine protease inhibitor Bi-KTI of Bombus ignitus (Bumblebee).